We begin with the raw amino-acid sequence, 310 residues long: Junctional adhesion molecule C (310 aa).

Positions 1–29 (MALSRRLRLRLYARLPDFFLLLLFRGCMI) are cleaved as a signal peptide. The Extracellular segment spans residues 30–241 (EAVNLKSSNR…GQDMEVYDLN (212 aa)). The region spanning 35–127 (KSSNRNPVVH…VALNDRKEVD (93 aa)) is the Ig-like V-type domain. 2 disulfide bridges follow: cysteine 53/cysteine 115 and cysteine 160/cysteine 219. N-linked (GlcNAc...) asparagine glycosylation is found at asparagine 104 and asparagine 192. Residues 139-236 (PVTPVCRIPA…AARCEGQDME (98 aa)) enclose the Ig-like C2-type domain. A helical transmembrane segment spans residues 242-262 (IAGIIGGVLVVLIVLAVITMG). At 263–310 (ICCAYRRGCFISSKQDGESYKSPGKHDGVNYIRTSEEGDFRHKSSFVI) the chain is on the cytoplasmic side. 2 S-palmitoyl cysteine lipidation sites follow: cysteine 264 and cysteine 265.

The protein belongs to the immunoglobulin superfamily. As to quaternary structure, interacts with ITGAM. Interacts with GORASP2. Post-translationally, proteolytically cleaved from endothelial cells surface into a soluble form by ADAM10 and ADAM17; the release of soluble JAM3 is increased by pro-inflammatory factors. In terms of processing, N-glycosylated. S-palmitoylated by ZDHHC7. S-palmitoylation promotes expression at tight junctions. In terms of tissue distribution, colocalizes with Jam2 near the lumen of seminiferous tubulues. Detected at junctional plaques that correspond to cell-cell contacts between spermatids and Sertoli cells. Detected on endothelial cells, in brain vessels and kidney glomeruli (at protein level). Detected in heart, lung, liver, kidney, testis, thymus, lymph node and Peyer patch. Endothelial cells.

It is found in the cell membrane. The protein resides in the cell junction. Its subcellular location is the desmosome. The protein localises to the tight junction. It localises to the secreted. Its function is as follows. Junctional adhesion protein that mediates heterotypic cell-cell interactions with its cognate receptor JAM2 to regulate different cellular processes. Plays a role in homing and mobilization of hematopoietic stem and progenitor cells within the bone marrow. At the surface of bone marrow stromal cells, it contributes to the retention of the hematopoietic stem and progenitor cells expressing JAM3. Plays a central role in leukocytes extravasation by facilitating transmigration through the endothelium. Plays a role in spermatogenesis where JAM2 and JAM3, which are respectively expressed by Sertoli and germ cells, mediate an interaction between both cell types and play an essential role in the anchorage of germ cells onto Sertoli cells and the assembly of cell polarity complexes during spermatid differentiation. Also functions as a counter-receptor for ITGAM, mediating leukocyte-platelet interactions and is involved in the regulation of transepithelial migration of polymorphonuclear neutrophils (PMN). Plays a role in angiogenesis. Plays a role in the regulation of cell migration. During myogenesis, it is involved in myocyte fusion. Functionally, promotes chemotaxis of vascular endothelial cells and stimulates angiogenesis. The chain is Junctional adhesion molecule C (Jam3) from Mus musculus (Mouse).